We begin with the raw amino-acid sequence, 543 residues long: Heparanase (543 aa).

An N-terminal signal peptide occupies residues 1-35 (MLLRSKPALPPPLMLLLLGPLGPLSPGALPRPAQA). Heparan sulfate group is bound by residues 62-64 (DAN) and Thr97. A propeptide spans 110-157 (STFEERSYWQSQVNQDICKYGSIPPDVEEKLRLEWPYQEQLLLREHYQ) (linker peptide). A disulfide bridge links Cys127 with Cys179. Residue 158–162 (KKFKN) participates in heparan sulfate group binding. 4 N-linked (GlcNAc...) asparagine glycosylation sites follow: Asn162, Asn178, Asn200, and Asn217. Glu225 functions as the Proton donor in the catalytic mechanism. Asn238 is a glycosylation site (N-linked (GlcNAc...) asparagine). Heparan sulfate group-binding positions include 270–280 (QPRRKTAKMLK), His296, and Arg303. The interval 288-417 (EVIDSVTWHH…LLFKKLVGTK (130 aa)) is required for heterodimerization with the heparanase 8 kDa subunit. The active-site Nucleophile is the Glu343. Heparan sulfate group-binding positions include 348–350 (YGG) and 389–391 (GNY). Cys437 and Cys542 form a disulfide bridge. A glycan (N-linked (GlcNAc...) asparagine) is linked at Asn459. The segment at 527–543 (FSYSFFVIRNAKVAACI) is required for transferring proheparanase to the Golgi apparatus, secretion and subsequent enzyme activity and for enhancement of PKB/AKT1 phosphorylation.

This sequence belongs to the glycosyl hydrolase 79 family. Heterodimer; heterodimer formation between the 8 kDa and the 50 kDa subunits is required for enzyme activity. Interacts with TF; the interaction, inhibited by heparin, enhances the generation of activated factor X and activates coagulation. Interacts with HRG; the interaction is enhanced at acidic pH, partially inhibits binding of HPSE to cell surface receptors and modulates its enzymatic activity. Interacts with SDC1; the interaction enhances the shedding of SDC1. Interacts with HPSE2. Proteolytically processed. The cleavage of the 65 kDa form leads to the generation of a linker peptide, and 8 kDa and 50 kDa products. The active form, the 8/50 kDa heterodimer, is resistant to degradation. Complete removal of the linker peptide appears to be a prerequisite to the complete activation of the enzyme. In terms of processing, N-glycosylated. Glycosylation of the 50 kDa subunit appears to be essential for its solubility. In terms of tissue distribution, highly expressed in placenta and spleen and weakly expressed in lymph node, thymus, peripheral blood leukocytes, bone marrow, endothelial cells, fetal liver and tumor tissues. Also expressed in hair follicles, specifically in both Henle's and Huxley's layers of inner the root sheath (IRS) at anagen phase.

It localises to the lysosome membrane. The protein resides in the secreted. The protein localises to the nucleus. The enzyme catalyses endohydrolysis of (1-&gt;4)-beta-D-glycosidic bonds of heparan sulfate chains in heparan sulfate proteoglycan.. With respect to regulation, inhibited by EDTA, laminarin sulfate and, to a lower extent, by heparin and sulfamin and activated by calcium and magnesium. Endoglycosidase that cleaves heparan sulfate proteoglycans (HSPGs) into heparan sulfate side chains and core proteoglycans. Participates in extracellular matrix (ECM) degradation and remodeling. Selectively cleaves the linkage between a glucuronic acid unit and an N-sulfo glucosamine unit carrying either a 3-O-sulfo or a 6-O-sulfo group. Can also cleave the linkage between a glucuronic acid unit and an N-sulfo glucosamine unit carrying a 2-O-sulfo group, but not linkages between a glucuronic acid unit and a 2-O-sulfated iduronic acid moiety. It is essentially inactive at neutral pH but becomes active under acidic conditions such as during tumor invasion and in inflammatory processes. Facilitates cell migration associated with metastasis, wound healing and inflammation. Enhances shedding of syndecans, and increases endothelial invasion and angiogenesis in myelomas. Acts as a procoagulant by increasing the generation of activation factor X in the presence of tissue factor and activation factor VII. Increases cell adhesion to the extracellular matrix (ECM), independent of its enzymatic activity. Induces AKT1/PKB phosphorylation via lipid rafts increasing cell mobility and invasion. Heparin increases this AKT1/PKB activation. Regulates osteogenesis. Enhances angiogenesis through up-regulation of SRC-mediated activation of VEGF. Implicated in hair follicle inner root sheath differentiation and hair homeostasis. This Homo sapiens (Human) protein is Heparanase (HPSE).